The following is a 560-amino-acid chain: Eukaryotic translation initiation factor 3 subunit D-1 (560 aa).

A disordered region spans residues 98-166 (VQKPPHQRGR…RGPPPKMRES (69 aa)). Residues 100–121 (KPPHQRGRFRNMRNSRSGRGRN) show a composition bias toward basic residues. T128 is modified (phosphothreonine). A compositionally biased stretch (basic residues) spans 147-156 (GRGMGKKFGH). The tract at residues 291–305 (EFDLLTVNESSVEPP) is RNA gate.

Belongs to the eIF-3 subunit D family. As to quaternary structure, component of the eukaryotic translation initiation factor 3 (eIF-3) complex. The eIF-3 complex interacts with pix.

It localises to the cytoplasm. Functionally, mRNA cap-binding component of the eukaryotic translation initiation factor 3 (eIF-3) complex, which is involved in protein synthesis of a specialized repertoire of mRNAs and, together with other initiation factors, stimulates binding of mRNA and methionyl-tRNAi to the 40S ribosome. The eIF-3 complex specifically targets and initiates translation of a subset of mRNAs involved in cell proliferation. In the eIF-3 complex, eif3d specifically recognizes and binds the 7-methylguanosine cap of a subset of mRNAs. The polypeptide is Eukaryotic translation initiation factor 3 subunit D-1 (Drosophila sechellia (Fruit fly)).